A 509-amino-acid chain; its full sequence is Cytochrome P450 monooxygenase ORF9 (509 aa).

2 consecutive transmembrane segments (helical) span residues 20-40 and 309-329; these read IYVLPFVISAAALCYFIGLIV and LIIAGGETVATFLAATVYYLL. An N-linked (GlcNAc...) asparagine glycan is attached at Asn-353. Heme is bound at residue Cys-448.

The protein belongs to the cytochrome P450 family. Heme is required as a cofactor.

It localises to the membrane. Its pathway is sesquiterpene biosynthesis. Cytochrome P450 monooxygenase; part of the gene cluster that mediates the biosynthesis of PR-toxin, a bicyclic sesquiterpene belonging to the eremophilane class and acting as a mycotoxin. The first step of the pathway is catalyzed by the aristolochene synthase which performs the cyclization of trans,trans-farnesyl diphosphate (FPP) to the bicyclic sesquiterpene aristolochene. Following the formation of aristolochene, the non-oxygenated aristolochene is converted to the trioxygenated intermediate eremofortin B, via 7-epi-neopetasone. This conversion appears to involve three enzymes, a hydroxysterol oxidase-like enzyme, the quinone-oxidase prx3 that forms the quinone-type-structure in the bicyclic nucleus of aristolochene with the C8-oxo group and the C-3 hydroxyl group, and the P450 monooxygenase ORF6 that introduces the epoxide at the double bond between carbons 1 and 2. No monoxy or dioxy-intermediates have been reported to be released to the broth, so these three early oxidative reactions may be coupled together. Eremofortin B is further oxidized by another P450 monooxygenase, that introduces a second epoxide between carbons 7 and 11 prior to acetylation to eremofortin A by the acetyltransferase ORF8. The second epoxidation may be performed by a second P450 monooxygenase. After the acetylation step, eremofortin A is converted to eremofortin C and then to PR-toxin. First the conversion of eremofortin A to eremofortin C proceeds by oxidation of the side chain of the molecule at C-12 and is catalyzed by the short-chain oxidoreductase prx1. The cytochrome P450 monooxygenase ORF6 is probably also involved in this step. The primary alcohol formed at C-12 is finally oxidized by the short-chain alcohol dehydrogenase prx4 that forms PR-toxin. The protein is Cytochrome P450 monooxygenase ORF9 of Penicillium roqueforti (strain FM164).